A 221-amino-acid polypeptide reads, in one-letter code: Stromal cell-derived factor 2-like protein 1 (221 aa).

Positions 1-28 (MWSAGRGGAAWPVLLGLLLALLVPGGGA) are cleaved as a signal peptide. 3 MIR domains span residues 33-87 (AELV…IRGG), 95-150 (GSPV…VRCS), and 151-205 (GQHW…AMEG). Position 215 is a phosphoserine (Ser215). Residues 218-221 (HDEL) carry the Prevents secretion from ER motif.

In terms of assembly, part of a large chaperone multiprotein complex comprising CABP1, DNAJB11, HSP90B1, HSPA5, HYOU, PDIA2, PDIA4, PPIB, SDF2L1, UGGT1 and very small amounts of ERP29, but not, or at very low levels, CALR nor CANX. In terms of tissue distribution, ubiquitously expressed with high expression in testis, moderate expression in the pancreas, spleen, prostate, small intestine and colon. Very low expression is seen in brain and skeletal muscle.

It localises to the endoplasmic reticulum lumen. In Homo sapiens (Human), this protein is Stromal cell-derived factor 2-like protein 1 (SDF2L1).